A 377-amino-acid polypeptide reads, in one-letter code: Flap endonuclease 1 (377 aa).

The tract at residues 1 to 105 (MGIKGLNAII…HELSKRTARR (105 aa)) is N-domain. Residue D34 participates in Mg(2+) binding. R47 and R71 together coordinate DNA. D87 lines the Mg(2+) pocket. The segment at 99 to 119 (SKRTARREETEKKLQEATDQA) is disordered. Residues 120-251 (EKMKQERRLV…VTALKLIKEY (132 aa)) form an I-domain region. The Mg(2+) site is built by E156, E158, D177, and D179. E156 contributes to the DNA binding site. 2 residues coordinate DNA: G229 and D231. D231 serves as a coordination point for Mg(2+). Residues 338-346 (VQGRLDGFF) form an interaction with PCNA region.

The protein belongs to the XPG/RAD2 endonuclease family. FEN1 subfamily. As to quaternary structure, interacts with PCNA. Three molecules of FEN1 bind to one PCNA trimer with each molecule binding to one PCNA monomer. PCNA stimulates the nuclease activity without altering cleavage specificity. The cofactor is Mg(2+). Post-translationally, phosphorylated. Phosphorylation upon DNA damage induces relocalization to the nuclear plasma.

It is found in the nucleus. It localises to the nucleolus. The protein resides in the nucleoplasm. The protein localises to the mitochondrion. Functionally, structure-specific nuclease with 5'-flap endonuclease and 5'-3' exonuclease activities involved in DNA replication and repair. During DNA replication, cleaves the 5'-overhanging flap structure that is generated by displacement synthesis when DNA polymerase encounters the 5'-end of a downstream Okazaki fragment. It enters the flap from the 5'-end and then tracks to cleave the flap base, leaving a nick for ligation. Also involved in the long patch base excision repair (LP-BER) pathway, by cleaving within the apurinic/apyrimidinic (AP) site-terminated flap. Acts as a genome stabilization factor that prevents flaps from equilibrating into structures that lead to duplications and deletions. Also possesses 5'-3' exonuclease activity on nicked or gapped double-stranded DNA, and exhibits RNase H activity. Also involved in replication and repair of rDNA and in repairing mitochondrial DNA. This is Flap endonuclease 1 from Vanderwaltozyma polyspora (strain ATCC 22028 / DSM 70294 / BCRC 21397 / CBS 2163 / NBRC 10782 / NRRL Y-8283 / UCD 57-17) (Kluyveromyces polysporus).